Here is a 208-residue protein sequence, read N- to C-terminus: Riboflavin synthase (208 aa).

Lumazine-binding repeat units lie at residues 1–97 (MFTG…MGGH) and 98–195 (FVQG…EKLV). 2,4-dihydroxypteridine-binding positions include 4–6 (GLV), 48–50 (CLT), 62–67 (GIAPES), 101–103 (GHV), K137, 146–148 (SLT), and 160–165 (MMISYT).

As to quaternary structure, homotrimer.

It carries out the reaction 2 6,7-dimethyl-8-(1-D-ribityl)lumazine + H(+) = 5-amino-6-(D-ribitylamino)uracil + riboflavin. Its pathway is cofactor biosynthesis; riboflavin biosynthesis; riboflavin from 2-hydroxy-3-oxobutyl phosphate and 5-amino-6-(D-ribitylamino)uracil: step 2/2. Its function is as follows. Catalyzes the dismutation of two molecules of 6,7-dimethyl-8-ribityllumazine, resulting in the formation of riboflavin and 5-amino-6-(D-ribitylamino)uracil. This Schizosaccharomyces pombe (strain 972 / ATCC 24843) (Fission yeast) protein is Riboflavin synthase (rib5).